The chain runs to 1249 residues: Myosin-1 (1249 aa).

The tract at residues Met1–Ala40 is disordered. The Myosin motor domain maps to Ile50–Asp729. Residue Gly143 to Thr150 coordinates ATP. Ser371 is modified (phosphoserine). Residues Ser418–Ala500 form an actin-binding region. IQ domains follow at residues His733–Cys753 and Ala754–Thr779. A TH1 domain is found at Arg787–Lys979. Disordered stretches follow at residues Asp959–Ala1081 and Glu1127–Trp1249. Low complexity-rich tracts occupy residues Pro1026–Pro1035 and Pro1043–Arg1061. A compositionally biased stretch (pro residues) spans Ala1062–Ala1073. The SH3 domain occupies Ala1074 to Ala1135. A compositionally biased stretch (pro residues) spans Thr1137 to Ala1149. The segment covering Pro1150 to Ala1170 has biased composition (low complexity). Residues Val1199 to Asn1221 show a composition bias toward polar residues. Over residues Ala1222–Arg1235 the composition is skewed to low complexity.

Belongs to the TRAFAC class myosin-kinesin ATPase superfamily. Myosin family. Interacts (via IQ domains) with camA. Post-translationally, phosphorylation of the TEDS site (Ser-371) is required for the polarization of the actin cytoskeleton. Phosphorylation probably activates the myosin-I ATPase activity.

It localises to the cytoplasm. The protein resides in the cytoskeleton. Its subcellular location is the actin patch. Type-I myosin implicated in the organization of the actin cytoskeleton. Required for proper actin cytoskeleton polarization. At the cell cortex, assembles in patch-like structures together with proteins from the actin-polymerizing machinery and promotes actin assembly. Functions as actin nucleation-promoting factor (NPF) for the Arp2/3 complex. Plays an important role in polarized growth, spore germination, hyphal morphogenesis, and septal wall formation. This Emericella nidulans (strain FGSC A4 / ATCC 38163 / CBS 112.46 / NRRL 194 / M139) (Aspergillus nidulans) protein is Myosin-1 (myoA).